Here is a 609-residue protein sequence, read N- to C-terminus: Serine/threonine-protein phosphatase 4 regulatory subunit 2 (609 aa).

Position 68 is a phosphoserine (S68). The disordered stretch occupies residues 175-569 (NNNGNADEGS…EEARVSPSAT (395 aa)). The span at 183 to 194 (GSSPGAGSAGCA) shows a compositional bias: low complexity. Residues 201–225 (RSDDNDQPKAKKAKLEIDGEERSEA) are compositionally biased toward basic and acidic residues. Phosphoserine occurs at positions 223 and 226. The segment covering 233–244 (VATRVKNEKDEK) has biased composition (basic and acidic residues). At S252 the chain carries Phosphoserine. The segment covering 258-270 (EIEEPDEEVDEAD) has biased composition (acidic residues). 2 stretches are compositionally biased toward basic and acidic residues: residues 310 to 351 (IEAE…KPDG) and 375 to 400 (EPVK…KQDD). Positions 401 to 410 (IDSTETDDAP) are enriched in acidic residues. A compositionally biased stretch (basic and acidic residues) spans 414–462 (KPAEEKIASSESKPKTKSEDDPEAETKKSQPEKTETEAAEKSVSDEKQA). At T602 the chain carries Phosphothreonine. S603 is modified (phosphoserine).

It belongs to the PPP4R2 family. As to quaternary structure, serine/threonine-protein phosphatase 4 (PP4) occurs in different assemblies of the catalytic and one or more regulatory subunits. Probably part of a PP4 PPP4C-PPP4R2-PPP4R3 complex containing Pp4-19C, PPP4R2r and flfl.

Regulatory subunit of serine/threonine-protein phosphatase 4 (PP4). The probable PP4 complex Pp4-19C-PPP4R2r-flfl (PPP4C-PPP4R2-PPP4R3) is required to prevent caspase induced cell death (in vitro). In Drosophila melanogaster (Fruit fly), this protein is Serine/threonine-protein phosphatase 4 regulatory subunit 2 (PPP4R2r).